The following is a 273-amino-acid chain: uncharacterized protein (273 aa).

This is an uncharacterized protein from Acheta domesticus (House cricket).